Consider the following 438-residue polypeptide: Ribosomal protein uS12 methylthiotransferase RimO (438 aa).

The MTTase N-terminal domain occupies 5 to 116 (PTIAISHLGC…IVQVIQRVEN (112 aa)). [4Fe-4S] cluster is bound by residues C14, C50, C79, C154, C158, and C161. In terms of domain architecture, Radical SAM core spans 140 to 369 (TTSEGVAYLR…MQIQQPISLQ (230 aa)). In terms of domain architecture, TRAM spans 372 to 438 (CACIGDIVDV…IYDLYGEVIN (67 aa)).

The protein belongs to the methylthiotransferase family. RimO subfamily. Requires [4Fe-4S] cluster as cofactor.

It localises to the cytoplasm. It catalyses the reaction L-aspartate(89)-[ribosomal protein uS12]-hydrogen + (sulfur carrier)-SH + AH2 + 2 S-adenosyl-L-methionine = 3-methylsulfanyl-L-aspartate(89)-[ribosomal protein uS12]-hydrogen + (sulfur carrier)-H + 5'-deoxyadenosine + L-methionine + A + S-adenosyl-L-homocysteine + 2 H(+). Its function is as follows. Catalyzes the methylthiolation of an aspartic acid residue of ribosomal protein uS12. This chain is Ribosomal protein uS12 methylthiotransferase RimO, found in Gloeothece citriformis (strain PCC 7424) (Cyanothece sp. (strain PCC 7424)).